Reading from the N-terminus, the 391-residue chain is MQDFNIESRSVLHMTAQIRAKQLAIRDAQNREQEAIVKTWEENGIDKSDETVSNDIVNSLETFYNISKSLNDYLKTQGINDIGYPIKFNKTDLQLKMALNYAKQQEDNLIDQIIKGKFYNGLSNDINSQELPVLQSDNMLSFWGNENSSVSSVLLASVAQILNIEPVPLVGAATNYKLHNPEYTLPQELIPEDYRFASQKGMLVFGDYQYGGHRTFEEQLVFGPEDCSSSVGKATYLSNEQIKSITTTQMKENYSKYDYKLITLLKDIVEPKQLELIEAGDIYVYKGHCAVIATKPDNKAEITTLEFSRNIDRAENKISGGGIYNYSLIDKAQEEPLNPIYILRKNLEPLPSQSSLKYFLSAIDEKYLNLYPEGPNEDVVGDCRIFFETQE.

This is an uncharacterized protein from Rickettsia prowazekii (strain Madrid E).